Consider the following 273-residue polypeptide: Nucleotide-binding protein TT_C1664 (273 aa).

An ATP-binding site is contributed by 8–15; the sequence is GLSGAGKT. Residue 57–60 coordinates GTP; the sequence is DARA.

The protein belongs to the RapZ-like family.

Functionally, displays ATPase and GTPase activities. The protein is Nucleotide-binding protein TT_C1664 of Thermus thermophilus (strain ATCC BAA-163 / DSM 7039 / HB27).